We begin with the raw amino-acid sequence, 177 residues long: UPF0114 protein HPP12_0190 (177 aa).

Transmembrane regions (helical) follow at residues 15–35 (WLLA…GYAF), 54–74 (LVLS…VLMV), 102–122 (FNAL…IFLL), and 145–165 (PIFW…LAAV).

The protein belongs to the UPF0114 family.

The protein localises to the cell membrane. This chain is UPF0114 protein HPP12_0190, found in Helicobacter pylori (strain P12).